The chain runs to 156 residues: Nucleoredoxin-like protein 2 (156 aa).

Residues 9 to 147 (RLVTREGTVV…LACFQNWVEA (139 aa)) enclose the Thioredoxin domain.

Belongs to the nucleoredoxin family. Both isoforms are expressed in retina, in the photoreceptor layer, and throughout the olfactory sensory neuron layer of the nasal epithelium, in neurons. Also expressed at low levels in brain and testis.

May be involved in the maintenance of both the function and the viability of sensory neurons, including photoreceptors and olfactory neurons. In the retina, isoform 1 may be required for rod function and isoform 2 for cone viability and function. This Mus musculus (Mouse) protein is Nucleoredoxin-like protein 2 (Nxnl2).